We begin with the raw amino-acid sequence, 277 residues long: Probable ketoamine kinase HMPREF0351_12196 (277 aa).

84-86 contributes to the ATP binding site; that stretch reads EWI. Catalysis depends on Asp186, which acts as the Proton acceptor.

Belongs to the fructosamine kinase family.

It carries out the reaction N(6)-(D-ribulosyl)-L-lysine + ATP = N(6)-(3-O-phospho-D-ribulosyl)-L-lysine + ADP + H(+). The catalysed reaction is N-(D-ribulosyl)-cadaverine + ATP = N-(3-O-phospho-D-ribulosyl)-cadaverine + ADP + H(+). It catalyses the reaction N(6)-(D-erythrulosyl)-L-lysine + ATP = N(6)-(3-O-phospho-D-erythrulosyl)-L-lysine + ADP + H(+). The enzyme catalyses N-(D-erythrulosyl)-cadaverine + ATP = N-(3-O-phospho-D-erythrulosyl)-cadaverine + ADP + H(+). It carries out the reaction N(6)-D-ribulosyl-L-lysyl-[protein] + ATP = N(6)-(3-O-phospho-D-ribulosyl)-L-lysyl-[protein] + ADP + H(+). The catalysed reaction is N(6)-(D-erythrulosyl)-L-lysyl-[protein] + ATP = N(6)-(3-O-phospho-D-erythrulosyl)-L-lysyl-[protein] + ADP + H(+). Its function is as follows. Ketoamine kinase that phosphorylates ketoamines, such as erythruloselysine, erythrulosecadaverine, ribuloselysine and ribulosecadaverine, on the third carbon of the sugar moiety to generate ketoamine 3-phosphate. Has higher activity on free lysine (erythruloselysine and ribuloselysine), than on ribuloselysine and erythruloselysine residues on glycated proteins. The protein is Probable ketoamine kinase HMPREF0351_12196 of Enterococcus faecium (strain ATCC BAA-472 / TX0016 / DO).